Here is a 280-residue protein sequence, read N- to C-terminus: Virginiamycin B lyase (280 aa).

H215 provides a ligand contact to substrate. Residue E254 coordinates Mg(2+). H256 serves as the catalytic Proton acceptor. Position 271 (E271) interacts with Mg(2+).

It belongs to the Vgb family. As to quaternary structure, monomer. Mg(2+) serves as cofactor.

Its function is as follows. Inactivates the type B streptogramin antibiotics by linearizing the lactone ring at the ester linkage, generating a free phenylglycine carboxylate and converting the threonyl moiety into 2-amino-butenoic acid. This chain is Virginiamycin B lyase, found in Mycobacterium sp. (strain KMS).